A 210-amino-acid polypeptide reads, in one-letter code: Cyclin-U1-1 (210 aa).

The protein belongs to the cyclin family. Cyclin U/P subfamily. As to quaternary structure, interacts with CDKA-1. As to expression, expressed in roots and flowers. Expressed in the shoot apex, leaf primordia and young leaves.

This chain is Cyclin-U1-1 (CYCU1-1), found in Arabidopsis thaliana (Mouse-ear cress).